A 397-amino-acid chain; its full sequence is Enoyl-[acyl-carrier-protein] reductase [NADH] (397 aa).

NAD(+) is bound by residues 48–53, 74–75, 111–112, and 139–140; these read GASTGY, FE, DA, and LA. Tyr-225 contributes to the substrate binding site. Catalysis depends on Tyr-235, which acts as the Proton donor. Residues Lys-244 and 273-275 contribute to the NAD(+) site; that span reads VVT.

It belongs to the TER reductase family. As to quaternary structure, monomer.

It catalyses the reaction a 2,3-saturated acyl-[ACP] + NAD(+) = a (2E)-enoyl-[ACP] + NADH + H(+). Its pathway is lipid metabolism; fatty acid biosynthesis. Its function is as follows. Involved in the final reduction of the elongation cycle of fatty acid synthesis (FAS II). Catalyzes the reduction of a carbon-carbon double bond in an enoyl moiety that is covalently linked to an acyl carrier protein (ACP). The polypeptide is Enoyl-[acyl-carrier-protein] reductase [NADH] (Pseudoalteromonas translucida (strain TAC 125)).